Here is a 178-residue protein sequence, read N- to C-terminus: Large ribosomal subunit protein uL6 (178 aa).

This sequence belongs to the universal ribosomal protein uL6 family. As to quaternary structure, part of the 50S ribosomal subunit.

Its function is as follows. This protein binds to the 23S rRNA, and is important in its secondary structure. It is located near the subunit interface in the base of the L7/L12 stalk, and near the tRNA binding site of the peptidyltransferase center. In Campylobacter hominis (strain ATCC BAA-381 / DSM 21671 / CCUG 45161 / LMG 19568 / NCTC 13146 / CH001A), this protein is Large ribosomal subunit protein uL6.